Consider the following 142-residue polypeptide: Protein OrfX1 (142 aa).

The protein belongs to the TULIP P47 family. In terms of assembly, orfX1 was not detected as part of a crude toxin extract that includes BoNTA2/NTNH, P47, OrfX2 and OrfX3.

In terms of biological role, part of a botulinum neurotoxin type A2 (BoNT) locus; may be part of a progenitor toxin complex required to protect BoNT during its passage through the host gastrointestinal tract. Binds phosphatidylinositol (3,4) bisphosphate, phosphatidylethanolamine and phosphatidylserine. The sequence is that of Protein OrfX1 (orfX1) from Clostridium botulinum (strain Kyoto / Type A2).